The chain runs to 396 residues: Argininosuccinate synthase (396 aa).

9 to 17 (AYSGGLDTS) is an ATP binding site. Tyr85 contacts L-citrulline. Position 115 (Gly115) interacts with ATP. Residues Thr117, Asn121, and Asp122 each coordinate L-aspartate. An L-citrulline-binding site is contributed by Asn121. Arg125, Ser173, Glu258, and Tyr270 together coordinate L-citrulline.

The protein belongs to the argininosuccinate synthase family. Type 1 subfamily. Homotetramer.

Its subcellular location is the cytoplasm. The enzyme catalyses L-citrulline + L-aspartate + ATP = 2-(N(omega)-L-arginino)succinate + AMP + diphosphate + H(+). The protein operates within amino-acid biosynthesis; L-arginine biosynthesis; L-arginine from L-ornithine and carbamoyl phosphate: step 2/3. The polypeptide is Argininosuccinate synthase (Streptococcus mutans serotype c (strain ATCC 700610 / UA159)).